A 1349-amino-acid polypeptide reads, in one-letter code: Adhesion G protein-coupled receptor F5 (1349 aa).

The first 24 residues, M1–S24, serve as a signal peptide directing secretion. Over R25–D1016 the chain is Extracellular. N-linked (GlcNAc...) asparagine glycosylation is found at N73, N94, N185, N254, N270, N286, N299, N326, N337, N349, N396, N470, N503, N538, N649, and N666. The SEA domain maps to P163–E271. 3 Ig-like domains span residues P268 to T366, P367 to T464, and A469 to T559. A disulfide bridge links C291 with C348. An intrachain disulfide couples C389 to C447. C490 and C543 form a disulfide bridge. A Phosphoserine modification is found at S819. N820, N958, and N963 each carry an N-linked (GlcNAc...) asparagine glycan. The region spanning T842–D1006 is the GAIN-B domain. Cystine bridges form between C954–C988 and C973–C990. Residues C954–D1006 form a GPS region. The tract at residues T994–S1009 is tethered agonist. Residues I1017 to V1036 traverse the membrane as a helical segment. Topologically, residues E1037–I1055 are cytoplasmic. Residues C1056–H1078 form a helical membrane-spanning segment. Residues D1079–H1097 lie on the Extracellular side of the membrane. A glycan (N-linked (GlcNAc...) asparagine) is linked at N1085. The helical transmembrane segment at F1098 to F1120 threads the bilayer. Topologically, residues I1121–K1131 are cytoplasmic. A helical membrane pass occupies residues A1132–Q1154. Residues P1155–R1173 are Extracellular-facing. A helical transmembrane segment spans residues A1174–V1196. At I1197–S1216 the chain is on the cytoplasmic side. The chain crosses the membrane as a helical span at residues L1217–L1239. The Extracellular segment spans residues A1240–A1248. A helical transmembrane segment spans residues V1249–L1271. The Cytoplasmic portion of the chain corresponds to W1272–N1349. T1303 bears the Phosphothreonine mark. At S1310 the chain carries Phosphoserine. Positions S1329 to S1343 are enriched in low complexity. The disordered stretch occupies residues S1329–N1349.

It belongs to the G-protein coupled receptor 2 family. Adhesion G-protein coupled receptor (ADGR) subfamily. As to quaternary structure, homodimer; disulfide-linked. Heterodimer of 2 chains generated by proteolytic processing; the large extracellular N-terminal fragment and the membrane-bound C-terminal fragment predominantly remain associated and non-covalently linked. Fragment generates by the processing enzyme furin remains attached to the extracellular N-terminal fragment. Interacts (via N-terminal extracellular domain) with SFTPD. Post-translationally, highly glycosylated. In terms of processing, proteolytically cleaved at multiple sites: one in the GPS region of the GAIN-B domain (S1 site) and the other in the SEA domain (S2 site). The proteolytic cleavage at S1 site generates an extracellular subunit and a seven-transmembrane subunit. The proteolytic cleavage at S2 site generates a fragment that undergoes proteolytic cleavage by the processing enzyme furin. As to expression, highly expressed in the lung and to a much lesser extent in the kidney and heart. Dense localization in alveolar walls of the lung and in the intercalated cells of the collecting duct of the kidney.

It is found in the cell membrane. As an adhesion G protein-coupled receptor (aGPCR) exhibits a large N-terminal extracellular domain containing highly conserved GPCR autoproteolysis-inducing (GAIN) domain. During synthesis, intracellular autoproteolytic processing of nascent chain within the GAIN domain generates a mature protein, consisting of an N-terminal fragment that is non-covalently linked to the C-terminal fragment. The mature protein is routed to the plasma membrane where the N- and C-terminal fragments remain associated, forming the holoreceptor. Dissociation of the aGPCR fragments stimulates G protein signaling through the action of the tethered-peptide agonist stalk that is occluded within the GAIN domain in the holoreceptor form. This dissociation might be induced by ligand binding, such as that of sFNDC4. Functionally, receptor that plays a critical role in lung surfactant homeostasis. May play a role in controlling adipocyte function. Adhesion G protein-coupled receptor. In alveolar type II (ATII or AT2) cells, required for normal lung surfactant homeostasis. Modulation of both surfactant secretion and uptake by ATII cells is mediated by the downstream activation of GNAQ/GNA11 proteins and may be a consequence of increased cortical F-actin assembly induced by ADGRF5 activation. In the kidney, may play a role in the regulation of acid excretion into the primary urine, possibly by regulating the surface expression of V-ATPase proton pump. As a receptor for soluble FNDC4 (sFNDC4), required for proper systemic glucose tolerance, specifically sensitizing white adipose tissue to insulin. Also plays a role in sFNDC4-induced decrease of local inflammation in white adipose tissue. This Rattus norvegicus (Rat) protein is Adhesion G protein-coupled receptor F5 (Adgrf5).